Consider the following 1226-residue polypeptide: 3-hydroxy-3-methylglutaryl-coenzyme A reductase (1226 aa).

5 helical membrane passes run 17–37 (IETI…ILSG), 224–244 (ILVV…LFLA), 252–272 (FWLS…TLPM), 337–357 (VGNM…VGVN), and 373–393 (LLAM…TIMV). Positions 223–391 (DILVVLTGYI…FTLYTAVLTI (169 aa)) constitute an SSD domain. The interval 428–449 (LSRKSSKQSVTEPETTKNLRQR) is disordered. A compositionally biased stretch (polar residues) spans 434 to 445 (KQSVTEPETTKN). The chain crosses the membrane as a helical span at residues 481 to 501 (LLLIASFLTLHILNFCTTLTS). Disordered stretches follow at residues 683 to 702 (APAP…PPPL) and 722 to 742 (LPIR…EVEP). The span at 685–702 (APAPAPEPEPPVNRPPPL) shows a compositional bias: pro residues. Catalysis depends on glutamate 869, which acts as the Charge relay system. CoA is bound at residue 875 to 881 (STSRGCK). NADP(+) is bound by residues 936–938 (SRF) and 963–971 (DAMGMNMIS). The active-site Charge relay system is lysine 1001. 1030–1032 (VLK) contacts CoA. Aspartate 1077 acts as the Charge relay system in catalysis. Residues 1150–1170 (IIASAVMAGELSLISALAAGH) traverse the membrane as a helical segment. 1174 to 1175 (AH) contributes to the CoA binding site. Histidine 1175 functions as the Proton donor in the catalytic mechanism. Position 1179-1180 (1179-1180 (NR)) interacts with NADP(+). Residues 1182 to 1226 (QLNTPMPSRPHTPGPEDVSHVQQLPTPSASDDKGVTAQGYVVEAK) are disordered. Polar residues predominate over residues 1201–1210 (HVQQLPTPSA).

Belongs to the HMG-CoA reductase family.

It is found in the endoplasmic reticulum membrane. The catalysed reaction is (R)-mevalonate + 2 NADP(+) + CoA = (3S)-3-hydroxy-3-methylglutaryl-CoA + 2 NADPH + 2 H(+). Its pathway is metabolic intermediate biosynthesis; (R)-mevalonate biosynthesis; (R)-mevalonate from acetyl-CoA: step 3/3. HMG-CoA reductase; part of the first module of ergosterol biosynthesis pathway that includes the early steps of the pathway, conserved across all eukaryotes, and which results in the formation of mevalonate from acetyl-coenzyme A (acetyl-CoA). This module also plays a key role in the biosynthesis of triterpenes such as ganoderic acids (GA), a group of highly oxygenated lanostane-type triterpenoids which are well recognized as a main group of unique bioactive compounds in the medicinal mushroom Ganoderma lucidum. In this module, the acetyl-CoA acetyltransferase catalyzes the formation of acetoacetyl-CoA. The hydroxymethylglutaryl-CoA synthase HMGS then condenses acetyl-CoA with acetoacetyl-CoA to form HMG-CoA. The rate-limiting step of the early module is the reduction to mevalonate by the 3-hydroxy-3-methylglutaryl-coenzyme A (HMG-CoA) reductase. This is 3-hydroxy-3-methylglutaryl-coenzyme A reductase from Ganoderma lucidum (Ling zhi medicinal fungus).